A 339-amino-acid polypeptide reads, in one-letter code: Ribosomal RNA small subunit methyltransferase C (339 aa).

Belongs to the methyltransferase superfamily. RsmC family. Monomer.

It is found in the cytoplasm. It catalyses the reaction guanosine(1207) in 16S rRNA + S-adenosyl-L-methionine = N(2)-methylguanosine(1207) in 16S rRNA + S-adenosyl-L-homocysteine + H(+). Its function is as follows. Specifically methylates the guanine in position 1207 of 16S rRNA in the 30S particle. In Photobacterium profundum (strain SS9), this protein is Ribosomal RNA small subunit methyltransferase C.